A 978-amino-acid chain; its full sequence is Calsyntenin-1 (978 aa).

Residues 1 to 26 form the signal peptide; it reads MTFHKTFGYGCIVLICFELLFAGVET. The Extracellular portion of the chain corresponds to 27–876; that stretch reads SSENDDEYLT…SFIHKAEGSH (850 aa). 2 Cadherin domains span residues 37–143 and 144–249; these read QKEI…APTF and LEPS…MPER. An N-linked (GlcNAc...) asparagine glycan is attached at asparagine 53. Asparagine 304, asparagine 486, asparagine 608, and asparagine 823 each carry an N-linked (GlcNAc...) asparagine glycan. A helical transmembrane segment spans residues 877-897; it reads VTMLIILVSVFLAVLLCGVSI. Residues 898–978 lie on the Cytoplasmic side of the membrane; sequence ARLKNNQKYI…EWDNSNIFQQ (81 aa). Residues 937 to 958 form a disordered region; that stretch reads ADVTSDASSESENSESEDEEAL. Residues 948–957 are compositionally biased toward acidic residues; that stretch reads ENSESEDEEA.

It belongs to the calsyntenin family.

The protein resides in the postsynaptic cell membrane. Postsynaptic adhesion molecule that binds to presynaptic neurexins to mediate both excitatory and inhibitory synapse formation. Promotes synapse development by acting as a cell adhesion molecule at the postsynaptic membrane, which associates with neurexin-alpha at the presynaptic membrane. In Drosophila melanogaster (Fruit fly), this protein is Calsyntenin-1 (Cals).